Consider the following 690-residue polypeptide: Protein arginine N-methyltransferase 7 (690 aa).

SAM-dependent MTase PRMT-type domains are found at residues 14 to 357 (QNSW…YSLW) and 366 to 690 (TKSV…QKKL).

It belongs to the class I-like SAM-binding methyltransferase superfamily. Protein arginine N-methyltransferase family. PRMT7 subfamily.

Essential arginine methyltransferase that can both catalyze the formation of omega-N monomethylarginine (MMA) and symmetrical dimethylarginine (sDMA). Specifically mediates the symmetrical dimethylation of arginine residues in the small nuclear ribonucleoproteins SmD1 and SmD3. The protein is Protein arginine N-methyltransferase 7 (Art7) of Drosophila yakuba (Fruit fly).